The sequence spans 521 residues: MADNEKLDNQRLKNFKNKGRDLETMRRQRNEVVVELRKNKRDEHLLKRRNVPQEDICEDSDIDGDYRVQNTSLEAIVQNASSDNQGIQLSAVQAARKLLSSDRNPPIDDLIKSGILPILVHCLERDDNPSLQFEAAWALTNIASGTSEQTQAVVQSNAVPLFLRLLHSPHQNVCEQAVWALGNIIGDGPQCRDYVISLGVVKPLLSFISPSIPITFLRNVTWVMVNLCRHKDPPPPMETIQEILPALCVLIHHTDVNILVDTVWALSYLTDAGNEQIQMVIDSGIVPHLVPLLSHQEVKVQTAALRAVGNIVTGTDEQTQVVLNCDALSHFPALLTHPKEKINKEAVWFLSNITAGNQQQVQAVIDANLVPMIIHLLDKGDFGTQKEAAWAISNLTISGRKDQVAYLIQQNVIPPFCNLLTVKDAQVVQVVLDGLSNILKMAEDQAETIANLIEECGGLEKIEQLQNHENEDIYKLAYEIIDQFFSSDDIDEDPSLVPESVQGGTFGFNSSTNVPTEGFQF.

The residue at position 2 (Ala2) is an N-acetylalanine. Residues Ala2–Glu58 enclose the IBB domain. The Nuclear localization signal signature appears at Glu43–Pro52. Ser60 is subject to Phosphoserine. Residues Tyr66 to Pro106 form an ARM 1; truncated repeat. ARM repeat units follow at residues Ile107–Gln149, Thr150–Tyr194, Val195–Pro233, Pro234–Gln278, Met279–Gln318, Thr319–Gln360, Val361–Arg400, and Lys401–Glu443. The interval Trp137–Arg229 is NLS binding site (major). The tract at residues Arg306–Asn394 is NLS binding site (minor). Residues Glu447–Phe485 form an ARM 10; atypical repeat.

This sequence belongs to the importin alpha family. As to quaternary structure, forms a complex with importin subunit beta-1 (KPNB1). Interacts with SNAI1. Interacts with TALDO1 isoform 1. Interacts with CYB1. As to expression, detected more or less in all tissues examined (Ehrlich ascites tumor cells, testis, kidney, spleen, liver, heart, lung, thymus, skeletal muscle, cerebellum and brain (without cerebellum)). Multiple-sized transcripts were highly expressed, especially in testis.

The protein resides in the cytoplasm. Its subcellular location is the nucleus. Functionally, functions in nuclear protein import as an adapter protein for nuclear receptor KPNB1. Binds specifically and directly to substrates containing either a simple or bipartite NLS motif. Docking of the importin/substrate complex to the nuclear pore complex (NPC) is mediated by KPNB1 through binding to nucleoporin FxFG repeats and the complex is subsequently translocated through the pore by an energy requiring, Ran-dependent mechanism. At the nucleoplasmic side of the NPC, Ran binds to importin-beta and the three components separate and importin-alpha and -beta are re-exported from the nucleus to the cytoplasm where GTP hydrolysis releases Ran from importin. The directionality of nuclear import is thought to be conferred by an asymmetric distribution of the GTP- and GDP-bound forms of Ran between the cytoplasm and nucleus. Mediates nuclear import of AARS1, MRTFA and RANBP3. This is Importin subunit alpha-3 (Kpna4) from Mus musculus (Mouse).